Consider the following 325-residue polypeptide: Ribonuclease Z (325 aa).

The Zn(2+) site is built by histidine 63, histidine 65, aspartate 67, histidine 68, histidine 147, aspartate 218, and histidine 276. Aspartate 67 serves as the catalytic Proton acceptor.

It belongs to the RNase Z family. In terms of assembly, homodimer. Zn(2+) serves as cofactor.

The enzyme catalyses Endonucleolytic cleavage of RNA, removing extra 3' nucleotides from tRNA precursor, generating 3' termini of tRNAs. A 3'-hydroxy group is left at the tRNA terminus and a 5'-phosphoryl group is left at the trailer molecule.. In terms of biological role, zinc phosphodiesterase, which displays some tRNA 3'-processing endonuclease activity. Probably involved in tRNA maturation, by removing a 3'-trailer from precursor tRNA. This chain is Ribonuclease Z, found in Oenococcus oeni (strain ATCC BAA-331 / PSU-1).